The following is a 167-amino-acid chain: Male-specific protein scotti (167 aa).

Residues asparagine 30, asparagine 124, and asparagine 148 are each glycosylated (N-linked (GlcNAc...) asparagine).

It belongs to the male-specific scotti family.

In terms of biological role, post-meiotically transcribed gene that has a role in late spermiogenesis; required for actin cone progression during spermatid individualization. The sequence is that of Male-specific protein scotti from Drosophila ananassae (Fruit fly).